The chain runs to 145 residues: Peroxide operon regulator (145 aa).

The interval 1–78 is DNA-binding; that stretch reads MAAHELKEAL…SGLVKELTYG (78 aa). Residues Cys96, Cys99, Cys136, and Cys139 each contribute to the Zn(2+) site.

This sequence belongs to the Fur family. As to quaternary structure, homodimer. Requires Mn(2+) as cofactor. Fe(2+) is required as a cofactor. It depends on Zn(2+) as a cofactor. Post-translationally, possibly oxidized on a cysteine residue; the Cys-SOH formed in response to oxidative signaling may rapidly react with a Cys-SH to form a disulfide bond, leading to the loss of metal ion and inactivation of repressor function. Oxidized PerR can be further reduced by thiol reductants and repressor activity restored.

It is found in the cytoplasm. In terms of biological role, hydrogen and organic peroxide sensor. Represses the expression of a regulon of peroxide-inducible genes such as katA, ahpC, ahpF, the heme biosynthesis operon (hemAXCDBL), fur, perR, zosA and mrgA. The protein is Peroxide operon regulator (perR) of Bacillus subtilis (strain 168).